Consider the following 249-residue polypeptide: Methionine aminopeptidase (249 aa).

His-77 contributes to the substrate binding site. The a divalent metal cation site is built by Asp-94, Asp-105, and His-168. His-175 contributes to the substrate binding site. Positions 201 and 232 each coordinate a divalent metal cation.

This sequence belongs to the peptidase M24A family. Methionine aminopeptidase type 1 subfamily. As to quaternary structure, monomer. Co(2+) serves as cofactor. Requires Zn(2+) as cofactor. It depends on Mn(2+) as a cofactor. The cofactor is Fe(2+).

It carries out the reaction Release of N-terminal amino acids, preferentially methionine, from peptides and arylamides.. Its function is as follows. Removes the N-terminal methionine from nascent proteins. The N-terminal methionine is often cleaved when the second residue in the primary sequence is small and uncharged (Met-Ala-, Cys, Gly, Pro, Ser, Thr, or Val). Requires deformylation of the N(alpha)-formylated initiator methionine before it can be hydrolyzed. The sequence is that of Methionine aminopeptidase from Clostridium perfringens (strain 13 / Type A).